A 131-amino-acid polypeptide reads, in one-letter code: Leptin receptor overlapping transcript-like 1 (131 aa).

A run of 4 helical transmembrane segments spans residues Leu-7–Leu-27, Lys-32–Ala-52, Leu-69–Ala-89, and Ala-100–Phe-120.

It belongs to the OB-RGRP/VPS55 family. Interacts with RAB13. Widely expressed, with highest expression in heart, testis, adrenal gland, thymus, and spleen, and lowest expression in lung and skeletal muscle.

Its subcellular location is the membrane. In terms of biological role, negatively regulates growth hormone (GH) receptor cell surface expression in liver. May play a role in liver resistance to GH during periods of reduced nutrient availability. The protein is Leptin receptor overlapping transcript-like 1 (LEPROTL1) of Homo sapiens (Human).